A 547-amino-acid chain; its full sequence is MGSEVNRPLADFPANIWEDPLTSFSKSDLGTETFKEKHSTLKEAVKEAFMSSKANPIENIKFIDALCRLGVSYHFEKDIVEQLDKSFDCLDFPQMVRQEGCDLYTVGIIFQVFRQFGFKLSADVFEKFKDENGKFKGHLVTDAYGMLSLYEAAQWGTHGEDIIDEALAFSRSHLEEISSRSSPHLAIRIKNALKHPYHKGISRIETRQYISYYEEEESCDPTLLEFAKIDFNLLQILHREELACVTRWHHEMEFKSKVTYTRHRITEAYLWSLGTYFEPQYSQARVITTMALILFTALDDMYDAYGTMEELELFTDAMDEWLPVVPDEIPIPDSMKFIYNVTVEFYDKLDEELEKEGRSGCGFHLKKSLQKTANGYMQEAKWLKKDYIATFDEYKENAILSSGYYALIAMTFVRMTDVAKLDAFEWLSSHPKIRVASEIISRFTDDISSYEFEHKREHVATGIDCYMQQFGVSKERAVEVMGNIVSDAWKDLNQELMRPHVFPFPLLMRVLNLSRVIDVFYRYQDAYTNPKLLKEHIVSLLIETIPI.

Residues arginine 262, aspartate 299, aspartate 303, arginine 442, and aspartate 445 each contribute to the (2E,6E)-farnesyl diphosphate site. Residues aspartate 299 and aspartate 303 each coordinate Mg(2+). The short motif at 299-303 (DDMYD) is the DDXXD motif element. Positions 445, 446, 449, and 453 each coordinate Mg(2+).

It belongs to the terpene synthase family. Tpsa subfamily. As to quaternary structure, monomer. It depends on Mg(2+) as a cofactor. The cofactor is Mn(2+). In terms of tissue distribution, expressed exclusively in flowers. Expressed in the flower stigmata and also detected in the mesocarp cell layers of the silique wall.

The protein localises to the cytoplasm. The enzyme catalyses (2E,6E)-farnesyl diphosphate = (-)-(E)-beta-caryophyllene + diphosphate. It carries out the reaction (2E,6E)-farnesyl diphosphate = alpha-copaene + diphosphate. It catalyses the reaction (2E,6E)-farnesyl diphosphate = alpha-humulene + diphosphate. The catalysed reaction is (2E,6E)-farnesyl diphosphate = (1S,2S,4R)-beta-elemene + diphosphate. Its pathway is secondary metabolite biosynthesis; terpenoid biosynthesis. Its function is as follows. Involved in sesquiterpene (C15) biosynthesis. The major products are beta-caryophyllene and alpha-humulene. Does not convert geranyl diphosphate (GPP) to any monoterpenes. The protein is Alpha-humulene/(-)-(E)-beta-caryophyllene synthase of Arabidopsis thaliana (Mouse-ear cress).